The primary structure comprises 308 residues: UPF0026 protein HP_0117 (308 aa).

The region spanning Phe18 to Ala248 is the Radical SAM core domain. Positions 33, 37, and 40 each coordinate [4Fe-4S] cluster.

It belongs to the UPF0026 family. The cofactor is [4Fe-4S] cluster.

This is UPF0026 protein HP_0117 from Helicobacter pylori (strain ATCC 700392 / 26695) (Campylobacter pylori).